Reading from the N-terminus, the 237-residue chain is uncharacterized protein (237 aa).

Residues L53–V70 traverse the membrane as a helical segment. The disordered stretch occupies residues P85–A155. Positions K98 to K157 form a coiled coil. 2 stretches are compositionally biased toward basic and acidic residues: residues T106–K122 and E128–A155. The SPOR domain maps to A165–K237.

It localises to the membrane. This is an uncharacterized protein from Aquifex aeolicus (strain VF5).